Consider the following 234-residue polypeptide: Venom allergen 3 (234 aa).

The N-terminal stretch at 1–22 is a signal peptide; that stretch reads MELIVSILWLAITAENLANTLA. Cystine bridges form between C26–C41, C31–C125, C52–C118, and C198–C216. Positions 69–218 constitute an SCP domain; sequence VNKHNELRQR…WTKHYLVCNY (150 aa). Residues 80-99 form a disordered region; it reads ASGKEMRGTNGPQPPAVKMP.

Belongs to the CRISP family. As to expression, expressed by the venom gland.

The protein resides in the secreted. The protein is Venom allergen 3 of Solenopsis invicta (Red imported fire ant).